Reading from the N-terminus, the 190-residue chain is MIVIVTGMPGSGKSRIVEEFEKRGFPSVSLGDIVREETVKRGLELTKENVAKVSIRLRQELGQNAVAKLAVGKVRVLLEKSPLVVIDGVRSLDEVGTFRGAFPEEKIIIVAVHTPPRLRFERLKARGRHDDPQTWEDFEERDWKELRFGIGGVIAMADHMLINDGSKEEYEKKVKTLVEKIIRGLNRGGA.

7–14 (GMPGSGKS) contributes to the ATP binding site.

Belongs to the UPF0200 family.

The chain is UPF0200 protein TGAM_0868 from Thermococcus gammatolerans (strain DSM 15229 / JCM 11827 / EJ3).